The following is a 461-amino-acid chain: Protein naked cuticle homolog 2 (461 aa).

Positions 1 to 106 (MGKFQSKHAA…DGEKAASREG (106 aa)) are disordered. The N-myristoyl glycine moiety is linked to residue G2. Composition is skewed to basic and acidic residues over residues 34-73 (RGAE…DKGS) and 97-106 (DGEKAASREG). The interval 121–186 (QCDVSVEEDN…LRVKLTVSPE (66 aa)) is interaction with DVL1, DVL2 and DVL3. An EF-hand domain is found at 127-162 (EEDNRQEWTFTLYDFDNSGKVTREDMSSLMHTIYEV). 5 residues coordinate Ca(2+): D140, D142, S144, K146, and D151. Disordered stretches follow at residues 176 to 205 (TLRV…PTRG), 263 to 302 (YTSK…HAIH), 321 to 359 (TRAL…PGKA), 372 to 414 (SAQD…GQPT), and 441 to 461 (HEHH…FHPS). The segment covering 188–205 (SSKKECPLTGQDREPTRG) has biased composition (basic and acidic residues). The interaction with TGFA stretch occupies residues 307-396 (QVLAEHVIPA…PPQPYGHKRY (90 aa)). Residues 341 to 350 (PKGPGKPLGT) show a composition bias toward low complexity. Pro residues predominate over residues 380–390 (PQPPPQPPPQP).

This sequence belongs to the NKD family. As to quaternary structure, interacts with RNF25, TGFA (via cytoplasmic domain), and PPP2R3A. Interacts with DVL1, DVL2 and DVL3. Post-translationally, ubiquitinated, leading to rapid proteasomal degradation. Interaction with TGFA interferes with RNF25 binding and protects against ubiquitination mediated by RNF25. Expressed in the cecum, colon, esophagus, ileum, jejunum, skin and stomach.

It is found in the cell membrane. The protein resides in the cytoplasm. The protein localises to the cytoplasmic vesicle. In terms of biological role, cell autonomous antagonist of the canonical Wnt signaling pathway. May activate a second Wnt signaling pathway that controls planar cell polarity. Required for processing of TGFA and for targeting of TGFA to the basolateral membrane of polarized epithelial cells. The protein is Protein naked cuticle homolog 2 (Nkd2) of Mus musculus (Mouse).